The primary structure comprises 389 residues: Putative teichuronic acid biosynthesis glycosyltransferase TuaC (389 aa).

It belongs to the glycosyltransferase group 1 family. Glycosyltransferase 4 subfamily.

Its pathway is cell wall biogenesis; teichuronic acid biosynthesis. The polypeptide is Putative teichuronic acid biosynthesis glycosyltransferase TuaC (tuaC) (Bacillus subtilis (strain 168)).